Reading from the N-terminus, the 117-residue chain is Large ribosomal subunit protein bL20c (117 aa).

Belongs to the bacterial ribosomal protein bL20 family.

It localises to the plastid. The protein resides in the chloroplast. In terms of biological role, binds directly to 23S ribosomal RNA and is necessary for the in vitro assembly process of the 50S ribosomal subunit. It is not involved in the protein synthesizing functions of that subunit. This Lemna minor (Common duckweed) protein is Large ribosomal subunit protein bL20c.